We begin with the raw amino-acid sequence, 784 residues long: ent-copalyl diphosphate synthase 2, chloroplastic (784 aa).

A chloroplast-targeting transit peptide spans 1 to 57 (MSMTLFASVTRPGLPGPTALRFPETRHLFHSVTAFAASFSPSKSSVGSSQCNATTPP). Lys-242 contacts substrate. Asp-379 and Asp-381 together coordinate Mg(2+). Positions 379 to 382 (DIDD) match the DXDD motif motif. Substrate is bound at residue Lys-466.

This sequence belongs to the terpene synthase family. It depends on Mg(2+) as a cofactor. Present in both leaves and flowers.

The protein resides in the plastid. Its subcellular location is the chloroplast. It participates in plant hormone biosynthesis; gibberellin biosynthesis. It functions in the pathway secondary metabolite biosynthesis; terpenoid biosynthesis. Its function is as follows. Involved in the biosynthesis of labdane-type diterpenoid including marrubiin and other labdane-related furanoid diterpenoids with potential applications as anti-diabetics, analgesics or vasorelaxants. May be involved in the conversion of geranylgeranyl diphosphate (GGPP) to ent-copalyl diphosphate (ent-CPP) and 8-hydroxycopalyl diphosphate (LPP, labda-13-en-8-ol diphosphate). The sequence is that of ent-copalyl diphosphate synthase 2, chloroplastic from Marrubium vulgare (White horehound).